Reading from the N-terminus, the 116-residue chain is Ribonuclease P protein component (116 aa).

The protein belongs to the RnpA family. Consists of a catalytic RNA component (M1 or rnpB) and a protein subunit.

The catalysed reaction is Endonucleolytic cleavage of RNA, removing 5'-extranucleotides from tRNA precursor.. Functionally, RNaseP catalyzes the removal of the 5'-leader sequence from pre-tRNA to produce the mature 5'-terminus. It can also cleave other RNA substrates such as 4.5S RNA. The protein component plays an auxiliary but essential role in vivo by binding to the 5'-leader sequence and broadening the substrate specificity of the ribozyme. The sequence is that of Ribonuclease P protein component from Geobacillus sp. (strain WCH70).